We begin with the raw amino-acid sequence, 346 residues long: Holliday junction branch migration complex subunit RuvB (346 aa).

A large ATPase domain (RuvB-L) region spans residues 1 to 188 (MSDEYGPPER…FGIVQRLAYY (188 aa)). ATP-binding positions include Leu27, Arg28, Gly69, Lys72, Thr73, Thr74, 135-137 (EDF), Arg178, Tyr188, and Arg225. Position 73 (Thr73) interacts with Mg(2+). The tract at residues 189–259 (PVDELTRIVQ…VAADAMELLD (71 aa)) is small ATPAse domain (RuvB-S). A head domain (RuvB-H) region spans residues 262-346 (RNGLDEQDRR…QAAGSGDLFG (85 aa)). The DNA site is built by Arg298, Arg317, and Arg322.

Belongs to the RuvB family. Homohexamer. Forms an RuvA(8)-RuvB(12)-Holliday junction (HJ) complex. HJ DNA is sandwiched between 2 RuvA tetramers; dsDNA enters through RuvA and exits via RuvB. An RuvB hexamer assembles on each DNA strand where it exits the tetramer. Each RuvB hexamer is contacted by two RuvA subunits (via domain III) on 2 adjacent RuvB subunits; this complex drives branch migration. In the full resolvosome a probable DNA-RuvA(4)-RuvB(12)-RuvC(2) complex forms which resolves the HJ.

The protein resides in the cytoplasm. It catalyses the reaction ATP + H2O = ADP + phosphate + H(+). Functionally, the RuvA-RuvB-RuvC complex processes Holliday junction (HJ) DNA during genetic recombination and DNA repair, while the RuvA-RuvB complex plays an important role in the rescue of blocked DNA replication forks via replication fork reversal (RFR). RuvA specifically binds to HJ cruciform DNA, conferring on it an open structure. The RuvB hexamer acts as an ATP-dependent pump, pulling dsDNA into and through the RuvAB complex. RuvB forms 2 homohexamers on either side of HJ DNA bound by 1 or 2 RuvA tetramers; 4 subunits per hexamer contact DNA at a time. Coordinated motions by a converter formed by DNA-disengaged RuvB subunits stimulates ATP hydrolysis and nucleotide exchange. Immobilization of the converter enables RuvB to convert the ATP-contained energy into a lever motion, pulling 2 nucleotides of DNA out of the RuvA tetramer per ATP hydrolyzed, thus driving DNA branch migration. The RuvB motors rotate together with the DNA substrate, which together with the progressing nucleotide cycle form the mechanistic basis for DNA recombination by continuous HJ branch migration. Branch migration allows RuvC to scan DNA until it finds its consensus sequence, where it cleaves and resolves cruciform DNA. This is Holliday junction branch migration complex subunit RuvB from Halorhodospira halophila (strain DSM 244 / SL1) (Ectothiorhodospira halophila (strain DSM 244 / SL1)).